The following is a 453-amino-acid chain: UDP-glucose 6-dehydrogenase (453 aa).

NAD(+) contacts are provided by residues 2 to 19, Val-11, Thr-121, and Glu-158; that span reads RLCV…AACF. Residues 154–158, Lys-210, Asn-214, 255–259, and Gly-263 contribute to the substrate site; these read EFLKE and FIYAG. Cys-266 functions as the Nucleophile in the catalytic mechanism. Residue Lys-269 coordinates NAD(+). Lys-327 lines the substrate pocket. Arg-334 is an NAD(+) binding site.

The protein belongs to the UDP-glucose/GDP-mannose dehydrogenase family.

It carries out the reaction UDP-alpha-D-glucose + 2 NAD(+) + H2O = UDP-alpha-D-glucuronate + 2 NADH + 3 H(+). It participates in nucleotide-sugar biosynthesis; UDP-alpha-D-glucuronate biosynthesis; UDP-alpha-D-glucuronate from UDP-alpha-D-glucose: step 1/1. The protein operates within bacterial outer membrane biogenesis; lipopolysaccharide biosynthesis. The protein is UDP-glucose 6-dehydrogenase (udg) of Pseudomonas aeruginosa (strain ATCC 15692 / DSM 22644 / CIP 104116 / JCM 14847 / LMG 12228 / 1C / PRS 101 / PAO1).